Consider the following 163-residue polypeptide: Fatty acid-binding protein homolog (163 aa).

Residues 1-23 form the signal peptide; it reads MRCLVALILTVLIVTPEVEAKTL.

The protein belongs to the calycin superfamily. Fatty-acid binding protein (FABP) family. Abundant in the fluid surrounding the developing embryo of Ascaris suum.

In terms of biological role, may play a role in sequestering potentially toxic fatty acids and their peroxidation products, or it may be involved in the maintenance of the impermeable lipid layer of the eggshell. This chain is Fatty acid-binding protein homolog, found in Ascaris suum (Pig roundworm).